Reading from the N-terminus, the 546-residue chain is Amidase FG08078 (546 aa).

Catalysis depends on charge relay system residues lysine 129 and serine 204. The Acyl-ester intermediate role is filled by serine 228.

This sequence belongs to the amidase family.

It participates in mycotoxin biosynthesis. In terms of biological role, amidase; part of the gene cluster that mediates the biosynthesis of butenolide, a mycotoxin that shows antibiotic activity but does not seem to play a major role in the spread of head blight in wheat. Butenolide is derived from glutamic acid via a 4-acetamido-2-butenoic acid intermediate. The predicted function of the NADH:flavin oxidoreductase FG08077, the cytochrome P450 monooxygenase FG08079, the decarboxylase FG08083, and the putative acetyltransferase FG08082 are consistent with this pathway, however, the respective activities of the butelonide biosynthesis cluster enzymes have still to be experimentally determined. This chain is Amidase FG08078, found in Gibberella zeae (strain ATCC MYA-4620 / CBS 123657 / FGSC 9075 / NRRL 31084 / PH-1) (Wheat head blight fungus).